Reading from the N-terminus, the 570-residue chain is Glycine--tRNA ligase (570 aa).

Residues arginine 99 and glutamate 165 each coordinate substrate. ATP-binding positions include 197–199 (RNE), 207–212 (IRLREF), 324–325 (EC), and 443–446 (GIDR). 212–216 (FTQAE) serves as a coordination point for substrate. 439–443 (EPSFG) provides a ligand contact to substrate.

The protein belongs to the class-II aminoacyl-tRNA synthetase family.

The protein localises to the cytoplasm. The enzyme catalyses tRNA(Gly) + glycine + ATP = glycyl-tRNA(Gly) + AMP + diphosphate. Functionally, catalyzes the attachment of glycine to tRNA(Gly). This chain is Glycine--tRNA ligase, found in Pyrococcus horikoshii (strain ATCC 700860 / DSM 12428 / JCM 9974 / NBRC 100139 / OT-3).